A 343-amino-acid chain; its full sequence is Protein RecA (343 aa).

68-75 (GPESGGKT) contributes to the ATP binding site.

It belongs to the RecA family.

The protein localises to the cytoplasm. Its function is as follows. Can catalyze the hydrolysis of ATP in the presence of single-stranded DNA, the ATP-dependent uptake of single-stranded DNA by duplex DNA, and the ATP-dependent hybridization of homologous single-stranded DNAs. It interacts with LexA causing its activation and leading to its autocatalytic cleavage. This is Protein RecA from Syntrophus aciditrophicus (strain SB).